Consider the following 673-residue polypeptide: Armadillo repeat-containing protein 8 (673 aa).

N-acetylalanine is present on alanine 2. 14 ARM repeats span residues 51–92, 95–134, 138–176, 178–217, 224–265, 269–309, 313–352, 374–413, 416–455, 458–497, 501–540, 543–585, 588–627, and 634–673; these read NKQK…SLAM, ENNV…TIFT, TPEE…HCCK, PDHQ…VLAF, MTLV…YMCR, IRTD…YLIE, ELQR…HDLK, DIRK…SLSR, QQLR…NLLL, SPSK…NMAF, QKIK…NLLS, PHID…NIAD, TAKD…NLIW, and QERQ…QYLA. Serine 337 is modified (phosphoserine). Position 512 is a phosphoserine (serine 512).

In terms of assembly, identified in the CTLH complex that contains GID4, RANBP9 and/or RANBP10, MKLN1, MAEA, RMND5A (or alternatively its paralog RMND5B), GID8, ARMC8, WDR26 and YPEL5. Within this complex, MAEA, RMND5A (or alternatively its paralog RMND5B), GID8, WDR26, and RANBP9 and/or RANBP10 form the catalytic core, while GID4, MKLN1, ARMC8 and YPEL5 have ancillary roles.

It is found in the nucleus. It localises to the cytoplasm. Functionally, component of the CTLH E3 ubiquitin-protein ligase complex that selectively accepts ubiquitin from UBE2H and mediates ubiquitination and subsequent proteasomal degradation of the transcription factor HBP1. This chain is Armadillo repeat-containing protein 8 (ARMC8), found in Homo sapiens (Human).